The sequence spans 143 residues: Ribosome maturation factor RimP (143 aa).

Belongs to the RimP family.

The protein resides in the cytoplasm. In terms of biological role, required for maturation of 30S ribosomal subunits. In Nitrosomonas eutropha (strain DSM 101675 / C91 / Nm57), this protein is Ribosome maturation factor RimP.